The following is a 544-amino-acid chain: E3 ubiquitin-protein ligase makorin-3 (544 aa).

Disordered stretches follow at residues 1–46 (MEES…VSSA) and 117–144 (DLSG…KMAT). 2 stretches are compositionally biased toward low complexity: residues 9 to 19 (EAHAAAGAEAG) and 36 to 46 (AAGASAGVSSA). 2 C3H1-type zinc fingers span residues 92–119 (WTKQ…HDLS) and 274–301 (PMPL…HGEI). Positions 302–329 (CDMCGQQALHPWDAAQQEAHRRACVEAH) are makorin-type Cys-His. The segment at 347-401 (CGICMEVVYEKADPSDRRFGILFSCNHTYCLRCIRRWRSATQFENRISKSCPQCR) adopts an RING-type zinc-finger fold. Residues 430–459 (GMSQKACRYFAGGLGHCPFGEFCFYKHEYP) form a C3H1-type 3 zinc finger.

Mainly expressed in mouse brain and reproductive system including testis and ovary. Ubiquitously detected at low levels throughout the entire embryo, but expression is highest in the ventricular layers of the brain.

The protein resides in the nucleus. It carries out the reaction S-ubiquitinyl-[E2 ubiquitin-conjugating enzyme]-L-cysteine + [acceptor protein]-L-lysine = [E2 ubiquitin-conjugating enzyme]-L-cysteine + N(6)-ubiquitinyl-[acceptor protein]-L-lysine.. It participates in protein modification; protein ubiquitination. E3 ubiquitin ligase catalyzing the covalent attachment of ubiquitin moieties onto substrate proteins. Acts as a key developmental timer that helps ensure puberty begins at the appropriate age, by inhibiting premature activation of the reproductive hormone cascade. Epigenetically regulates GNRH1 transcription by disrupting the binding of methyl-DNA binding protein 3/MBD3 to the promoter of GNRH1. Mechanistically, mediates the non-proteolytic ubiquitination of MBD3 at multiple sites with 'Lys27' ubiquitin linkages and thereby regulates the methylation status of the genome, including GNRH1 promoter. Modulates the stability and translation of GNRH1 mRNA by mediating the non-proteolytic ubiquitination of PABP family members PABPC1, PABPC3 and PABPC4 at multiple sites. Also participates in the maintenance of genomic and epigenomic stability by regulating the abundance of APEX2 via 'Lys-48'-linked ubiquitination. This Mus musculus (Mouse) protein is E3 ubiquitin-protein ligase makorin-3 (Mkrn3).